Here is a 755-residue protein sequence, read N- to C-terminus: Serine/threonine-protein kinase GA29083 (755 aa).

Low complexity predominate over residues 18–52 (QASASGSGTPKKTAASSAAAQNSKQLLDQLSQQQK). The interval 18–128 (QASASGSGTP…GSANTNGSAS (111 aa)) is disordered. 2 stretches are compositionally biased toward basic and acidic residues: residues 53–66 (AQEEAETHSRRDCD) and 74–84 (EPEKDLDELRD). The span at 87-99 (GSLTGSGSVGKSN) shows a compositional bias: polar residues. Residues 100–128 (GSLSGASSTTSAPAGTSTPGSANTNGSAS) show a composition bias toward low complexity. 2 consecutive Doublecortin domains span residues 157–243 (HRIK…VDYN) and 314–397 (RIVT…VEDF). One can recognise a Protein kinase domain in the interval 484–742 (YTLSQIIGDG…SEDILDHYWT (259 aa)). ATP is bound by residues 490-498 (IGDGNFAIV) and Lys-513. The active-site Proton acceptor is the Asp-605.

Belongs to the protein kinase superfamily. CAMK Ser/Thr protein kinase family. CaMK subfamily.

It carries out the reaction L-seryl-[protein] + ATP = O-phospho-L-seryl-[protein] + ADP + H(+). The enzyme catalyses L-threonyl-[protein] + ATP = O-phospho-L-threonyl-[protein] + ADP + H(+). The protein is Serine/threonine-protein kinase GA29083 of Drosophila pseudoobscura pseudoobscura (Fruit fly).